We begin with the raw amino-acid sequence, 376 residues long: Gibberellin 20 oxidase 4 (376 aa).

The region spanning 222 to 322 (DNESIFRLNY…RKTLAFFLCP (101 aa)) is the Fe2OG dioxygenase domain. His-247, Asp-249, and His-303 together coordinate Fe cation. Arg-313 is a catalytic residue.

This sequence belongs to the iron/ascorbate-dependent oxidoreductase family. GA20OX subfamily. Fe(2+) is required as a cofactor. Requires L-ascorbate as cofactor. In terms of tissue distribution, expressed in roots. Detected in leaves, inflorescences and siliques, but not in stems and dry seeds.

It carries out the reaction gibberellin A12 + 2 2-oxoglutarate + 3 O2 + H(+) = gibberellin A9 + 2 succinate + 3 CO2 + 2 H2O. The catalysed reaction is gibberellin A53 + 2 2-oxoglutarate + 3 O2 + H(+) = gibberellin A20 + 2 succinate + 3 CO2 + 2 H2O. Its pathway is plant hormone biosynthesis; gibberellin biosynthesis. Key oxidase enzyme in the biosynthesis of gibberellin that catalyzes the conversion of GA12 and GA53 to GA9 and GA20 respectively, via a three-step oxidation at C-20 of the GA skeleton. This is Gibberellin 20 oxidase 4 (GA20OX4) from Arabidopsis thaliana (Mouse-ear cress).